Consider the following 85-residue polypeptide: MAHKKAGGSTNNGRDSVSKRLGVKRFGGQVVLAGNILVRQRGTKFHPGTNVRKGKDDTLFATMDGRVVFSKKGKFMYQYISIEIT.

It belongs to the bacterial ribosomal protein bL27 family.

This Vesicomyosocius okutanii subsp. Calyptogena okutanii (strain HA) protein is Large ribosomal subunit protein bL27.